A 194-amino-acid chain; its full sequence is Porimin (194 aa).

An N-terminal signal peptide occupies residues 1 to 24 (MALCARAALLLGALQVLALPGAVA). Residues 25–151 (QETYAQGSPS…PTKGKGSKFD (127 aa)) lie on the Extracellular side of the membrane. N-linked (GlcNAc...) asparagine glycosylation is found at N36, N47, N51, N59, N76, and N114. Residues 88–124 (KVSTPGVSPHVTPSASKSTPKTSASPNSTQTSASMTT) form a disordered region. The span at 99–124 (TPSASKSTPKTSASPNSTQTSASMTT) shows a compositional bias: low complexity. Residues 152 to 172 (AGSFVGGIVLTLGVLSILYIG) form a helical membrane-spanning segment. Residues 173–194 (CKMYYSRRGIRYRSIDEHDAII) are Cytoplasmic-facing. S186 carries the post-translational modification Phosphoserine.

Belongs to the CD164 family.

Its subcellular location is the membrane. Its function is as follows. Implicated in oncotic cell death, characterized by cell swelling, organelle swelling, vacuolization and increased membrane permeability. In Rattus norvegicus (Rat), this protein is Porimin (Tmem123).